We begin with the raw amino-acid sequence, 37 residues long: MKVRASVKKMCDKCRVIRRHGRVMVICENPKHKQRQG.

The protein belongs to the bacterial ribosomal protein bL36 family.

The protein is Large ribosomal subunit protein bL36 of Synechococcus sp. (strain WH7803).